The following is a 213-amino-acid chain: Succinate dehydrogenase subunit 3-1, mitochondrial (213 aa).

The N-terminal 105 residues, Met-1–Phe-105, are a transit peptide targeting the mitochondrion. A heme-binding site is contributed by His-130. The chain crosses the membrane as a helical span at residues Ile-148–Leu-165.

In terms of assembly, component of complex II composed of eight subunits in plants: four classical SDH subunits SDH1, SDH2, SDH3 and SDH4 (a flavoprotein (FP), an iron-sulfur protein (IP), and a cytochrome b composed of a large and a small subunit.), as well as four subunits unknown in mitochondria from bacteria and heterotrophic eukaryotes. Heme serves as cofactor. In terms of tissue distribution, expressed in flowers, inflorescences and stems.

It localises to the mitochondrion inner membrane. Its pathway is carbohydrate metabolism; tricarboxylic acid cycle. In terms of biological role, membrane-anchoring subunit of succinate dehydrogenase (SDH). The protein is Succinate dehydrogenase subunit 3-1, mitochondrial of Arabidopsis thaliana (Mouse-ear cress).